We begin with the raw amino-acid sequence, 203 residues long: Probable GTP-binding protein EngB (203 aa).

One can recognise an EngB-type G domain in the interval 24–199 (DGSEVAFAGR…HTVIETWLGL (176 aa)). GTP is bound by residues 32–39 (GRSNAGKS), 59–63 (GRTQQ), 77–80 (DLPG), 144–147 (TKAD), and 178–180 (FSS). Ser-39 and Thr-61 together coordinate Mg(2+).

The protein belongs to the TRAFAC class TrmE-Era-EngA-EngB-Septin-like GTPase superfamily. EngB GTPase family. Requires Mg(2+) as cofactor.

Functionally, necessary for normal cell division and for the maintenance of normal septation. The protein is Probable GTP-binding protein EngB of Xylella fastidiosa (strain 9a5c).